The sequence spans 541 residues: Membrane protein insertase YidC (541 aa).

Transmembrane regions (helical) follow at residues 7 to 27, 289 to 309, 356 to 376, 430 to 450, 463 to 483, and 498 to 518; these read FLIV…GVTH, YLLT…VTLP, IIHS…LAFY, LPIL…LEMV, LSAQ…MFAQ, and IMMA…SGLV.

Belongs to the OXA1/ALB3/YidC family. Type 1 subfamily. In terms of assembly, interacts with the Sec translocase complex via SecD. Specifically interacts with transmembrane segments of nascent integral membrane proteins during membrane integration.

The protein resides in the cell inner membrane. Its function is as follows. Required for the insertion and/or proper folding and/or complex formation of integral membrane proteins into the membrane. Involved in integration of membrane proteins that insert both dependently and independently of the Sec translocase complex, as well as at least some lipoproteins. Aids folding of multispanning membrane proteins. The polypeptide is Membrane protein insertase YidC (Ruthia magnifica subsp. Calyptogena magnifica).